Reading from the N-terminus, the 275-residue chain is Light-independent protochlorophyllide reductase iron-sulfur ATP-binding protein (275 aa).

ATP is bound by residues 12–17 and Lys41; that span reads GIGKST. Mg(2+) is bound at residue Ser16. The [4Fe-4S] cluster site is built by Cys97 and Cys131. An ATP-binding site is contributed by 182 to 183; that stretch reads NR.

The protein belongs to the NifH/BchL/ChlL family. As to quaternary structure, homodimer. Protochlorophyllide reductase is composed of three subunits; BchL, BchN and BchB. [4Fe-4S] cluster serves as cofactor.

It carries out the reaction chlorophyllide a + oxidized 2[4Fe-4S]-[ferredoxin] + 2 ADP + 2 phosphate = protochlorophyllide a + reduced 2[4Fe-4S]-[ferredoxin] + 2 ATP + 2 H2O. Its pathway is porphyrin-containing compound metabolism; bacteriochlorophyll biosynthesis (light-independent). In terms of biological role, component of the dark-operative protochlorophyllide reductase (DPOR) that uses Mg-ATP and reduced ferredoxin to reduce ring D of protochlorophyllide (Pchlide) to form chlorophyllide a (Chlide). This reaction is light-independent. The L component serves as a unique electron donor to the NB-component of the complex, and binds Mg-ATP. The chain is Light-independent protochlorophyllide reductase iron-sulfur ATP-binding protein from Prosthecochloris aestuarii (strain DSM 271 / SK 413).